The following is a 345-amino-acid chain: Phosphoribosylformylglycinamidine cyclo-ligase (345 aa).

Belongs to the AIR synthase family.

Its subcellular location is the cytoplasm. The catalysed reaction is 2-formamido-N(1)-(5-O-phospho-beta-D-ribosyl)acetamidine + ATP = 5-amino-1-(5-phospho-beta-D-ribosyl)imidazole + ADP + phosphate + H(+). Its pathway is purine metabolism; IMP biosynthesis via de novo pathway; 5-amino-1-(5-phospho-D-ribosyl)imidazole from N(2)-formyl-N(1)-(5-phospho-D-ribosyl)glycinamide: step 2/2. This chain is Phosphoribosylformylglycinamidine cyclo-ligase, found in Myxococcus xanthus (strain DK1622).